A 57-amino-acid chain; its full sequence is MLLVVIFGLVALFALWGVLRSVRNKNILGFLLAGATLFVFGWFTVMTVINSGYPTAH.

The next 2 helical transmembrane spans lie at 2 to 22 and 29 to 49; these read LLVV…LRSV and GFLL…MTVI.

The protein resides in the cell membrane. This is an uncharacterized protein from Bacillus subtilis (strain 168).